The following is a 298-amino-acid chain: Protoheme IX farnesyltransferase (298 aa).

A run of 9 helical transmembrane segments spans residues Val-26–Val-46, Leu-52–Val-72, Val-93–Leu-113, Leu-120–Leu-140, Ile-148–Gly-168, Ala-174–Leu-194, Leu-219–Gln-239, Ser-241–Ile-261, and Tyr-278–Phe-298.

This sequence belongs to the UbiA prenyltransferase family. Protoheme IX farnesyltransferase subfamily.

Its subcellular location is the cell inner membrane. The catalysed reaction is heme b + (2E,6E)-farnesyl diphosphate + H2O = Fe(II)-heme o + diphosphate. The protein operates within porphyrin-containing compound metabolism; heme O biosynthesis; heme O from protoheme: step 1/1. Its function is as follows. Converts heme B (protoheme IX) to heme O by substitution of the vinyl group on carbon 2 of heme B porphyrin ring with a hydroxyethyl farnesyl side group. This Nitrosomonas eutropha (strain DSM 101675 / C91 / Nm57) protein is Protoheme IX farnesyltransferase.